The primary structure comprises 217 residues: Cyclin-P2-1 (217 aa).

The protein belongs to the cyclin family. Cyclin U/P subfamily.

The polypeptide is Cyclin-P2-1 (CYCP2-1) (Oryza sativa subsp. japonica (Rice)).